A 215-amino-acid chain; its full sequence is Urease accessory protein UreE (215 aa).

A disordered region spans residues 134 to 215 (FDPEGGAYAP…HGHSHKHDHK (82 aa)). A compositionally biased stretch (basic and acidic residues) spans 164 to 206 (GHHDHADHEHDHKHDHGKHDHAGHDHAHDHHVHDEHCGHDHGH).

Belongs to the UreE family.

It is found in the cytoplasm. In terms of biological role, involved in urease metallocenter assembly. Binds nickel. Probably functions as a nickel donor during metallocenter assembly. In Rhodopseudomonas palustris (strain HaA2), this protein is Urease accessory protein UreE.